We begin with the raw amino-acid sequence, 386 residues long: D(1)-like dopamine receptor (386 aa).

The segment covering 1–10 (MEIFTTTRGT) has biased composition (polar residues). Residues 1-28 (MEIFTTTRGTSAGPEPAPGGHGGTDSPR) are disordered. Residues 1–35 (MEIFTTTRGTSAGPEPAPGGHGGTDSPRTSDLSLR) lie on the Extracellular side of the membrane. Residues 36–56 (ALTGCVLCILIVSTLLGNALV) traverse the membrane as a helical segment. The Cytoplasmic portion of the chain corresponds to 57-72 (CAAVIKFRHLRSKVTN). A helical transmembrane segment spans residues 73–92 (AFVISLAVSDLFVAVLVMPW). Residues 93–109 (RAVSEVAGVWLFGAFCD) are Extracellular-facing. Cysteines 108 and 188 form a disulfide. The chain crosses the membrane as a helical span at residues 110-131 (TWVAFDIMCSTASILHLCIISM). Over 132-150 (DRYWAISSPFRYERRMTPR) the chain is Cytoplasmic. The chain crosses the membrane as a helical span at residues 151 to 175 (FGCVMIGVAWTLSVLISFIPVQLNW). At 176–195 (HARGRERTDPGDCNASLNRT) the chain is on the extracellular side. N189 and N193 each carry an N-linked (GlcNAc...) asparagine glycan. A helical transmembrane segment spans residues 196–220 (YAISSSLISFYIPVLIMVGTYTRIF). Topologically, residues 221-266 (RIGRTQIRRISSLERAAPRATRGPALCDEESSLKTSFRRETKVLKT) are cytoplasmic. The chain crosses the membrane as a helical span at residues 267–292 (LSVIMGVFVFCWLPFFVLNCMVPFCR). At 293 to 305 (LEPAAAPCVSDTT) the chain is on the extracellular side. A helical transmembrane segment spans residues 306-325 (FSVFVWFGWANSSLNPVIYA). The Cytoplasmic segment spans residues 326-386 (FNADFRKAFS…SRGGPYQFAL (61 aa)).

It belongs to the G-protein coupled receptor 1 family.

It localises to the cell membrane. The protein resides in the cell projection. Its subcellular location is the cilium membrane. This is one of the five types (D1 to D5) of receptors for dopamine. The activity of this receptor is mediated by G proteins which activate adenylyl cyclase. This chain is D(1)-like dopamine receptor, found in Oreochromis mossambicus (Mozambique tilapia).